Reading from the N-terminus, the 794-residue chain is Histone-lysine N-methyltransferase, H3 lysine-9 specific SUVH5 (794 aa).

Disordered stretches follow at residues 187–210 and 254–276; these read VGRD…KRSI and SPVK…KNSE. A compositionally biased stretch (polar residues) spans 194–203; that stretch reads NMGSKFSKNG. Basic and acidic residues predominate over residues 258-276; that stretch reads PSEKRNGDYGEGSMRKNSE. A YDG domain is found at 365 to 515; that stretch reads GTVPGVEVGD…KLVFKFKLRR (151 aa). The Pre-SET domain maps to 585–644; that stretch reads KSCGCTNGCSKSKNCACIVKNGGKIPYYDGAIVEIKPLVYECGPHCKCPPSCNMRVSQHG. The 118-residue stretch at 647 to 764 folds into the SET domain; it reads IKLEIFKTES…PLQELSYDYN (118 aa). The Post-SET domain occupies 778-794; sequence KKKFCYCGSAECSGRLY.

This sequence belongs to the class V-like SAM-binding methyltransferase superfamily. Histone-lysine methyltransferase family. Suvar3-9 subfamily. As to expression, expressed in leaves stems and flowers.

Its subcellular location is the nucleus. It localises to the chromosome. The protein resides in the centromere. It catalyses the reaction N(6)-methyl-L-lysyl(9)-[histone H3] + S-adenosyl-L-methionine = N(6),N(6)-dimethyl-L-lysyl(9)-[histone H3] + S-adenosyl-L-homocysteine + H(+). The enzyme catalyses L-lysyl(9)-[histone H3] + S-adenosyl-L-methionine = N(6)-methyl-L-lysyl(9)-[histone H3] + S-adenosyl-L-homocysteine + H(+). Functionally, histone methyltransferase. Methylates 'Lys-9' of histone H3. H3 'Lys-9' methylation represents a specific tag for epigenetic transcriptional repression. The sequence is that of Histone-lysine N-methyltransferase, H3 lysine-9 specific SUVH5 (SUVH5) from Arabidopsis thaliana (Mouse-ear cress).